Here is a 530-residue protein sequence, read N- to C-terminus: Hyccin 2 (530 aa).

A phosphothreonine mark is found at T30 and T306. 2 positions are modified to phosphoserine: S321 and S341. The interval 328-404 is disordered; the sequence is RREGAEGLNG…SNESPRDSVV (77 aa). Positions 353–373 are enriched in polar residues; it reads SGASLSSQPHGTKPPSSSQRG. 4 positions are modified to phosphoserine: S430, S442, S444, and S491. The interval 502 to 530 is disordered; it reads EGKELLSPGAPLTKQSRSPSFNMQLISQV. Over residues 514–530 the composition is skewed to polar residues; the sequence is TKQSRSPSFNMQLISQV.

It belongs to the Hyccin family. In terms of assembly, component of a phosphatidylinositol 4-kinase (PI4K) complex, composed of PI4KA, EFR3 (EFR3A or EFR3B), TTC7 (TTC7A or TTC7B) and HYCC (HYCC1 or HYCC2). As to expression, expressed in the central nervous system. Expressed at much lower level in oligodendrocytes than in neurons.

It localises to the cytoplasm. The protein localises to the cytosol. It is found in the cell membrane. Its function is as follows. Component of a complex required to localize phosphatidylinositol 4-kinase (PI4K) to the plasma membrane. This Mus musculus (Mouse) protein is Hyccin 2 (Hycc2).